We begin with the raw amino-acid sequence, 210 residues long: Coatomer subunit zeta-2 (210 aa).

A compositionally biased stretch (basic and acidic residues) spans 1–12 (MQRPEAWPRPHP). The tract at residues 1 to 34 (MQRPEAWPRPHPGEGAAAAQAGGPAPPARAGEPS) is disordered. Over residues 13 to 34 (GEGAAAAQAGGPAPPARAGEPS) the composition is skewed to low complexity.

Belongs to the adaptor complexes small subunit family. In terms of assembly, oligomeric complex.

The protein resides in the cytoplasm. It localises to the endoplasmic reticulum-Golgi intermediate compartment membrane. Its subcellular location is the golgi apparatus membrane. The protein localises to the cytoplasmic vesicle. It is found in the COPI-coated vesicle membrane. The coatomer is a cytosolic protein complex that binds to dilysine motifs and reversibly associates with Golgi non-clathrin-coated vesicles, which further mediate biosynthetic protein transport from the ER, via the Golgi up to the trans Golgi network. Coatomer complex is required for budding from Golgi membranes, and is essential for the retrograde Golgi-to-ER transport of dilysine-tagged proteins. The zeta subunit may be involved in regulating the coat assembly and, hence, the rate of biosynthetic protein transport due to its association-dissociation properties with the coatomer complex. This is Coatomer subunit zeta-2 (COPZ2) from Homo sapiens (Human).